A 232-amino-acid polypeptide reads, in one-letter code: Phosphatidylserine decarboxylase proenzyme (232 aa).

Ser190 functions as the Schiff-base intermediate with substrate; via pyruvic acid in the catalytic mechanism. Ser190 is subject to Pyruvic acid (Ser); by autocatalysis.

It belongs to the phosphatidylserine decarboxylase family. PSD-A subfamily. As to quaternary structure, heterodimer of a large membrane-associated beta subunit and a small pyruvoyl-containing alpha subunit. Requires pyruvate as cofactor. In terms of processing, is synthesized initially as an inactive proenzyme. Formation of the active enzyme involves a self-maturation process in which the active site pyruvoyl group is generated from an internal serine residue via an autocatalytic post-translational modification. Two non-identical subunits are generated from the proenzyme in this reaction, and the pyruvate is formed at the N-terminus of the alpha chain, which is derived from the carboxyl end of the proenzyme. The post-translation cleavage follows an unusual pathway, termed non-hydrolytic serinolysis, in which the side chain hydroxyl group of the serine supplies its oxygen atom to form the C-terminus of the beta chain, while the remainder of the serine residue undergoes an oxidative deamination to produce ammonia and the pyruvoyl prosthetic group on the alpha chain.

The protein resides in the cell membrane. The catalysed reaction is a 1,2-diacyl-sn-glycero-3-phospho-L-serine + H(+) = a 1,2-diacyl-sn-glycero-3-phosphoethanolamine + CO2. Its pathway is phospholipid metabolism; phosphatidylethanolamine biosynthesis; phosphatidylethanolamine from CDP-diacylglycerol: step 2/2. Its function is as follows. Catalyzes the formation of phosphatidylethanolamine (PtdEtn) from phosphatidylserine (PtdSer). In Cereibacter sphaeroides (strain ATCC 17025 / ATH 2.4.3) (Rhodobacter sphaeroides), this protein is Phosphatidylserine decarboxylase proenzyme.